The primary structure comprises 367 residues: Probable butyrate kinase (367 aa).

It belongs to the acetokinase family.

The protein resides in the cytoplasm. The catalysed reaction is butanoate + ATP = butanoyl phosphate + ADP. This is Probable butyrate kinase from Bacillus anthracis (strain A0248).